The sequence spans 93 residues: YcgL domain-containing protein Ssed_2518 (93 aa).

Residues 1 to 85 (MICAVYKSRR…PKVNLLEQHK (85 aa)) form the YcgL domain.

The polypeptide is YcgL domain-containing protein Ssed_2518 (Shewanella sediminis (strain HAW-EB3)).